Reading from the N-terminus, the 371-residue chain is LIM domain-binding protein 2 (371 aa).

Disordered stretches follow at residues 244 to 289 (APPA…AAAN) and 325 to 371 (QYDA…QASQ). The span at 263–289 (STSSTSNSSAGNNANSTNSKKKSAAAN) shows a compositional bias: low complexity. The LIM interaction domain (LID) domain occupies 296–335 (DVMVVGEPTLMGGEFGDEDERLITRLENTQYDAANGMDDE). Residues 339–371 (NNSPALGNNSPWNSKPPANQETKSENPTPQASQ) show a composition bias toward polar residues.

It belongs to the LDB family. First expressed at stages 15-16 in presumptive limb mesoderm. As limb outgrowth proceeds, expressed in the entire limb bud, concentrating in the distal mesoderm throughout limb development. Both hindlimbs and forelimbs exhibit similar expression patterns.

It localises to the nucleus. In terms of biological role, binds to the LIM domain of a wide variety of LIM domain-containing transcription factors. The chain is LIM domain-binding protein 2 (LDB2) from Gallus gallus (Chicken).